The primary structure comprises 197 residues: UPF0637 protein LEUM_0496 (197 aa).

Belongs to the UPF0637 family.

The chain is UPF0637 protein LEUM_0496 from Leuconostoc mesenteroides subsp. mesenteroides (strain ATCC 8293 / DSM 20343 / BCRC 11652 / CCM 1803 / JCM 6124 / NCDO 523 / NBRC 100496 / NCIMB 8023 / NCTC 12954 / NRRL B-1118 / 37Y).